The following is a 621-amino-acid chain: Ubiquitin-like-specific protease 1 (621 aa).

Residue Ser2 is modified to N-acetylserine. Phosphoserine occurs at positions 21 and 25. 2 disordered regions span residues 116 to 150 (FDGS…ENYS) and 169 to 196 (RRRI…SNCD). Low complexity predominate over residues 124–141 (SGNSDVESRSSGSRSSDV). Thr179 carries the post-translational modification Phosphothreonine. The span at 179-196 (TPSTSPISSLASQKSNCD) shows a compositional bias: polar residues. Residue Ser264 is modified to Phosphoserine. A protease region spans residues 432–621 (NIEITVRDFK…AHLILTDALK (190 aa)). Active-site residues include His514, Asp531, and Cys580.

This sequence belongs to the peptidase C48 family.

It catalyses the reaction Hydrolysis of the alpha-linked peptide bond in the sequence Gly-Gly-|-Ala-Thr-Tyr at the C-terminal end of the small ubiquitin-like modifier (SUMO) propeptide, Smt3, leading to the mature form of the protein. A second reaction involves the cleavage of an epsilon-linked peptide bond between the C-terminal glycine of the mature SUMO and the lysine epsilon-amino group of the target protein.. In terms of biological role, protease that catalyzes two essential functions in the SUMO pathway: processing of full-length SMT3 to its mature form and deconjugation of SMT3 from targeted proteins. Has an essential role in the G2/M phase of the cell cycle. The protein is Ubiquitin-like-specific protease 1 (ULP1) of Saccharomyces cerevisiae (strain ATCC 204508 / S288c) (Baker's yeast).